Consider the following 177-residue polypeptide: Probable DNA-directed RNA polymerase subunit delta (177 aa).

The HTH HARE-type domain occupies 14–83; it reads LSMIEVARAI…GENKWGLRSW (70 aa). Acidic residues-rich tracts occupy residues 117-134 and 142-157; these read GDDD…DEDN and EYDD…EVES. Residues 117-164 are disordered; sequence GDDDAIDYGHDDPEDEDNYPGSVSSEYDDENPDDEKDEVESYDQKSTK.

It belongs to the RpoE family. RNAP is composed of a core of 2 alpha, a beta and a beta' subunits. The core is associated with a delta subunit and one of several sigma factors.

Participates in both the initiation and recycling phases of transcription. In the presence of the delta subunit, RNAP displays an increased specificity of transcription, a decreased affinity for nucleic acids, and an increased efficiency of RNA synthesis because of enhanced recycling. The chain is Probable DNA-directed RNA polymerase subunit delta from Streptococcus suis (strain 98HAH33).